Reading from the N-terminus, the 466-residue chain is Probable aminotransferase Rv3329 (466 aa).

Lysine 294 is modified (N6-(pyridoxal phosphate)lysine).

It belongs to the class-III pyridoxal-phosphate-dependent aminotransferase family. The cofactor is pyridoxal 5'-phosphate.

Its function is as follows. Probable aminotransferase. The polypeptide is Probable aminotransferase Rv3329 (Mycobacterium tuberculosis (strain ATCC 25618 / H37Rv)).